Consider the following 64-residue polypeptide: Large ribosomal subunit protein bL35 (64 aa).

Belongs to the bacterial ribosomal protein bL35 family.

The sequence is that of Large ribosomal subunit protein bL35 from Vibrio atlanticus (strain LGP32) (Vibrio splendidus (strain Mel32)).